A 426-amino-acid polypeptide reads, in one-letter code: Deoxyguanosinetriphosphate triphosphohydrolase-like protein (426 aa).

The segment at 1–23 (MYPYSESDAQRLHQEAPKASQLA) is disordered. One can recognise an HD domain in the interval 67–217 (RLTHSLEVAQ…MDFSDDIAYS (151 aa)).

It belongs to the dGTPase family. Type 2 subfamily.

The chain is Deoxyguanosinetriphosphate triphosphohydrolase-like protein from Corynebacterium efficiens (strain DSM 44549 / YS-314 / AJ 12310 / JCM 11189 / NBRC 100395).